The sequence spans 370 residues: Phospho-N-acetylmuramoyl-pentapeptide-transferase (370 aa).

Helical transmembrane passes span 15 to 35, 44 to 64, 93 to 113, 115 to 135, 155 to 175, 183 to 203, 213 to 233, 240 to 260, 268 to 288, 296 to 316, and 347 to 367; these read PLEGKVSAGVLAVVVYAAAFA, LLSLPLLIATLIAAIVTWWGV, MGGLLVVPVGVIVGGLISWSG, AAEQLLAVAFITLAYMVVGGI, LLLQALAAVIFLIWAGMRGWI, FDINLPLNWLIWPLAVFVFLA, GLDGLAAGCGALVFTGMALQL, GDPSLAGFCMAMAGCWIGFLV, VFMGDTGSLAMGGALTAVALL, LIMGGIFLAESLSVIIQVWVF, and QLVVPGFWLATVFLVLIGIFF.

This sequence belongs to the glycosyltransferase 4 family. MraY subfamily. Requires Mg(2+) as cofactor.

It localises to the cell inner membrane. The enzyme catalyses UDP-N-acetyl-alpha-D-muramoyl-L-alanyl-gamma-D-glutamyl-meso-2,6-diaminopimeloyl-D-alanyl-D-alanine + di-trans,octa-cis-undecaprenyl phosphate = di-trans,octa-cis-undecaprenyl diphospho-N-acetyl-alpha-D-muramoyl-L-alanyl-D-glutamyl-meso-2,6-diaminopimeloyl-D-alanyl-D-alanine + UMP. Its pathway is cell wall biogenesis; peptidoglycan biosynthesis. In terms of biological role, catalyzes the initial step of the lipid cycle reactions in the biosynthesis of the cell wall peptidoglycan: transfers peptidoglycan precursor phospho-MurNAc-pentapeptide from UDP-MurNAc-pentapeptide onto the lipid carrier undecaprenyl phosphate, yielding undecaprenyl-pyrophosphoryl-MurNAc-pentapeptide, known as lipid I. In Synechococcus sp. (strain CC9311), this protein is Phospho-N-acetylmuramoyl-pentapeptide-transferase.